A 588-amino-acid chain; its full sequence is Lysophospholipase 2 (588 aa).

A disordered region spans residues 15–38 (NRALPNAPDGYTPQGETCPSKRPS). In terms of domain architecture, PLA2c spans 31–574 (TCPSKRPSIR…KTYCWNGTIN (544 aa)). N-linked (GlcNAc...) asparagine glycosylation is found at N41, N58, N77, N84, N88, N119, N123, N157, N167, N228, N272, N302, N340, N431, N449, N478, N481, N501, N510, N529, N553, N570, and N574.

It belongs to the lysophospholipase family.

It carries out the reaction a 1-acyl-sn-glycero-3-phosphocholine + H2O = sn-glycerol 3-phosphocholine + a fatty acid + H(+). In terms of biological role, catalyzes the release of fatty acids from lysophospholipids. The protein is Lysophospholipase 2 (plb2) of Aspergillus fumigatus (strain ATCC MYA-4609 / CBS 101355 / FGSC A1100 / Af293) (Neosartorya fumigata).